The sequence spans 253 residues: Chromosome-partitioning ATPase Soj (253 aa).

ATP contacts are provided by lysine 11, glycine 12, glycine 13, valine 14, glycine 15, lysine 16, threonine 17, threonine 18, proline 211, and asparagine 213. Threonine 17 provides a ligand contact to Mg(2+).

The protein belongs to the ParA family.

It catalyses the reaction ATP + H2O = ADP + phosphate + H(+). Functionally, ATPase probably involved in chromosome partitioning. Cooperatively binds dsDNA, forming nucleoprotein filaments in a strictly ATP-dependent fashion. The protein is Chromosome-partitioning ATPase Soj of Treponema pallidum (strain Nichols).